We begin with the raw amino-acid sequence, 114 residues long: Large ribosomal subunit protein uL22 (114 aa).

The protein belongs to the universal ribosomal protein uL22 family. As to quaternary structure, part of the 50S ribosomal subunit.

Its function is as follows. This protein binds specifically to 23S rRNA; its binding is stimulated by other ribosomal proteins, e.g. L4, L17, and L20. It is important during the early stages of 50S assembly. It makes multiple contacts with different domains of the 23S rRNA in the assembled 50S subunit and ribosome. Functionally, the globular domain of the protein is located near the polypeptide exit tunnel on the outside of the subunit, while an extended beta-hairpin is found that lines the wall of the exit tunnel in the center of the 70S ribosome. The protein is Large ribosomal subunit protein uL22 of Streptococcus agalactiae serotype Ia (strain ATCC 27591 / A909 / CDC SS700).